Consider the following 1012-residue polypeptide: Isoleucine--tRNA ligase, mitochondrial (1012 aa).

The transit peptide at 1 to 48 directs the protein to the mitochondrion; sequence MHWGLCPRGPGAAAVAAAGSFWGPARLPSRLGCLGMTRRLVVRSVAGA. K56 carries the post-translational modification N6-succinyllysine. K74 carries the N6-acetyllysine; alternate modification. Position 74 is an N6-succinyllysine; alternate (K74). The 'HIGH' region motif lies at 116–126; the sequence is PYANGDPHVGH. An N6-succinyllysine modification is found at K194. An N6-acetyllysine modification is found at K233. An N6-acetyllysine; alternate modification is found at K241. Position 241 is an N6-succinyllysine; alternate (K241). Residues K479 and K500 each carry the N6-succinyllysine modification. Residues K664 and K667 each contribute to the ATP site. The 'KMSKS' region signature appears at 664 to 668; sequence KMSKS. Position 725 is an N6-acetyllysine (K725). Residues K775 and K781 each carry the N6-acetyllysine; alternate modification. Residues K775 and K781 each carry the N6-succinyllysine; alternate modification.

It belongs to the class-I aminoacyl-tRNA synthetase family.

It is found in the mitochondrion matrix. The enzyme catalyses tRNA(Ile) + L-isoleucine + ATP = L-isoleucyl-tRNA(Ile) + AMP + diphosphate. Its function is as follows. Aminoacyl-tRNA synthetase that catalyzes the specific attachment of isoleucine to its cognate tRNA (tRNA(Ile)). The sequence is that of Isoleucine--tRNA ligase, mitochondrial from Mus musculus (Mouse).